A 274-amino-acid polypeptide reads, in one-letter code: Tryptophan synthase alpha chain (274 aa).

Residues Glu-49 and Asp-60 each act as proton acceptor in the active site.

The protein belongs to the TrpA family. Tetramer of two alpha and two beta chains.

The enzyme catalyses (1S,2R)-1-C-(indol-3-yl)glycerol 3-phosphate + L-serine = D-glyceraldehyde 3-phosphate + L-tryptophan + H2O. It functions in the pathway amino-acid biosynthesis; L-tryptophan biosynthesis; L-tryptophan from chorismate: step 5/5. Its function is as follows. The alpha subunit is responsible for the aldol cleavage of indoleglycerol phosphate to indole and glyceraldehyde 3-phosphate. This Alkalilimnicola ehrlichii (strain ATCC BAA-1101 / DSM 17681 / MLHE-1) protein is Tryptophan synthase alpha chain.